The sequence spans 1465 residues: Vacuolar heme ABC transmembrane exporter abc3 (1465 aa).

The Extracellular portion of the chain corresponds to 1-8 (MITANKGL). The chain crosses the membrane as a helical span at residues 9–29 (SLVLLIPNLFALVSGGLQYVF). The Cytoplasmic portion of the chain corresponds to 30–42 (DVRRRIFRPHFSQ). A helical membrane pass occupies residues 43–63 (FWTIWMKFFSIALVIITQIYV). At 64-69 (GYKTKN) the chain is on the extracellular side. The chain crosses the membrane as a helical span at residues 70-90 (IGWNFFSVVTYCFVLFLQFAE). At 91–97 (QSTLRVP) the chain is on the cytoplasmic side. Residues 98–118 (MASLLIFWLLKVVTSLLILLF) traverse the membrane as a helical segment. At 119 to 129 (SPYIAITSMAR) the chain is on the extracellular side. Residues 130–150 (LLTLITLFCSLVCFISEVYVP) form a helical membrane-spanning segment. Position 151-152 (151-152 (PC)) interacts with heme. At 151-235 (PCNRVWYSDD…IYHSKNKRRS (85 aa)) the chain is on the cytoplasmic side. The chain crosses the membrane as a helical span at residues 236–256 (LFLWKLLFFNHWKLVALITIT). Positions 250 to 539 (VALITITKLI…LPTVISSLLE (290 aa)) constitute an ABC transmembrane type-1 1 domain. Residues 257-291 (KLIQDVLAFVQPTLIQKTILFISSYTSPNPESPSR) are Extracellular-facing. A helical membrane pass occupies residues 292–312 (GFIIAILVLVANFLQTLLLQQ). Topologically, residues 313 to 362 (YNQLIMLLGMRWKTELLASIYRKSLLLSSSARQNRSIGDIINYMAVDTQK) are cytoplasmic. Residues 363–383 (ISDLPIYLFIIVSGPFQIALA) traverse the membrane as a helical segment. Residues 384 to 394 (LSNLYHLMGYS) are Extracellular-facing. A helical membrane pass occupies residues 395–415 (AFTGVAASVILFPCNIIVANV). At 416–480 (YKKFQSILMK…KIGFITAIGD (65 aa)) the chain is on the cytoplasmic side. A helical membrane pass occupies residues 481 to 501 (FAWIFTTIIVTTVAFGAFIIF). Residues 502-511 (HGKTQALTAD) are Extracellular-facing. Residues 512-532 (IVFPAVSLFNLLQFPLAMLPT) form a helical membrane-spanning segment. Topologically, residues 533 to 899 (VISSLLEASV…VYWMYFKSCS (367 aa)) are cytoplasmic. The region spanning 575-804 (LEIKSGTFSW…TNSELKQQLS (230 aa)) is the ABC transporter 1 domain. 614–621 (GKVGAGKS) contacts ATP. 2 disordered regions span residues 805 to 824 (EFNDEKDTQPLPEHTTSYPS) and 840 to 869 (TYSSSERKDSSNKYKSRKRNPIRQKVTEDD). A helical membrane pass occupies residues 900 to 920 (IGLILLYFFFIISGIMMNVAT). The 287-residue stretch at 903–1189 (ILLYFFFIIS…IVQQSVDAEN (287 aa)) folds into the ABC transmembrane type-1 2 domain. At 921–939 (NVWLKHWSEENGKSSSELN) the chain is on the extracellular side. Residues 940-960 (PSPYFYLGIYLFFGFLSCAFI) form a helical membrane-spanning segment. Topologically, residues 961–1033 (SSSSLTMTVL…FFFRNSIQVL (73 aa)) are cytoplasmic. Residues 1034 to 1054 (FILGVICYSAPLSLLLIVPLF) traverse the membrane as a helical segment. The Extracellular segment spans residues 1055–1465 (FLYLYNRAYY…YSLAKESGLI (411 aa)). The region spanning 1226 to 1460 (VSFNHYSAKY…KDSMFYSLAK (235 aa)) is the ABC transporter 2 domain. Position 1260-1267 (1260-1267 (GRTGAGKS)) interacts with ATP.

This sequence belongs to the ABC transporter superfamily.

It localises to the vacuole membrane. Iron-regulated vacuolar transporter that mobilizes stored heme from the vacuole to the cytosol in response to iron deficiency. This Schizosaccharomyces pombe (strain 972 / ATCC 24843) (Fission yeast) protein is Vacuolar heme ABC transmembrane exporter abc3.